Reading from the N-terminus, the 86-residue chain is Cell division topological specificity factor (86 aa).

Belongs to the MinE family.

Prevents the cell division inhibition by proteins MinC and MinD at internal division sites while permitting inhibition at polar sites. This ensures cell division at the proper site by restricting the formation of a division septum at the midpoint of the long axis of the cell. This chain is Cell division topological specificity factor, found in Albidiferax ferrireducens (strain ATCC BAA-621 / DSM 15236 / T118) (Rhodoferax ferrireducens).